The sequence spans 483 residues: Nucleolar protein 4 (483 aa).

2 disordered regions span residues 210 to 418 (QQDE…PIPS) and 435 to 483 (SESR…DPQI). A compositionally biased stretch (acidic residues) spans 211–225 (QDEDESSIESDEFDM). 3 stretches are compositionally biased toward polar residues: residues 229-254 (TRMSAVNSDLSSNLEERMQSPQTVHG), 262-271 (AESSNGNETL), and 302-317 (QPLNLSDSPSSAQLTS). Composition is skewed to basic and acidic residues over residues 319-330 (FRIDDQGSDGKN) and 340-350 (LKMEREARENG). Positions 351-363 (SKSPAHSYSSYDS) are enriched in polar residues. Composition is skewed to basic and acidic residues over residues 364–374 (GKNESVDRGAE), 391–409 (HEDSEKVNETDGVEAERLK), and 435–451 (SESRNAAKRMRLDKAQD). Polar residues predominate over residues 467-483 (ATYSTATVPGSQEDPQI).

The protein resides in the nucleus. It is found in the nucleolus. The chain is Nucleolar protein 4 (Nol4) from Mus musculus (Mouse).